The sequence spans 101 residues: MNVAEFHQKVEQVWQQIEEKIDDEALSIDTEIHGAVCTLTFDDESQIIINKQEAMLELWLASKLGGFHFAFRDCEWVTAEGRSFWAHLEEAFARHGEQISF.

The protein belongs to the frataxin family.

In terms of biological role, involved in iron-sulfur (Fe-S) cluster assembly. May act as a regulator of Fe-S biogenesis. This chain is Iron-sulfur cluster assembly protein CyaY, found in Actinobacillus pleuropneumoniae serotype 7 (strain AP76).